The chain runs to 363 residues: Chalcone synthase B (363 aa).

C170 is an active-site residue.

The protein belongs to the thiolase-like superfamily. Chalcone/stilbene synthases family.

The enzyme catalyses (E)-4-coumaroyl-CoA + 3 malonyl-CoA + 3 H(+) = 2',4,4',6'-tetrahydroxychalcone + 3 CO2 + 4 CoA. It participates in secondary metabolite biosynthesis; flavonoid biosynthesis. In terms of biological role, the primary product of this enzyme is 4,2',4',6'-tetrahydroxychalcone (also termed naringenin-chalcone or chalcone) which can under specific conditions spontaneously isomerize into naringenin. The protein is Chalcone synthase B (CHSB) of Ipomoea cordatotriloba (Tievine).